Here is a 320-residue protein sequence, read N- to C-terminus: Cytochrome f (320 aa).

The first 35 residues, 1–35, serve as a signal peptide directing secretion; sequence MQTKNTFSWIKKEIIRSISVSLMIYIIARTSISNA. Positions 36, 56, 59, and 60 each coordinate heme. Residues 286–306 form a helical membrane-spanning segment; sequence VQGLLFFLASVILAQIFLVLK.

Belongs to the cytochrome f family. In terms of assembly, the 4 large subunits of the cytochrome b6-f complex are cytochrome b6, subunit IV (17 kDa polypeptide, petD), cytochrome f and the Rieske protein, while the 4 small subunits are PetG, PetL, PetM and PetN. The complex functions as a dimer. Heme is required as a cofactor.

The protein resides in the plastid. It is found in the chloroplast thylakoid membrane. In terms of biological role, component of the cytochrome b6-f complex, which mediates electron transfer between photosystem II (PSII) and photosystem I (PSI), cyclic electron flow around PSI, and state transitions. This Eucalyptus globulus subsp. globulus (Tasmanian blue gum) protein is Cytochrome f.